The following is a 949-amino-acid chain: Syndetin (949 aa).

A disordered region spans residues 1–28 (MQKIKSLMTRQGLRSPQESVHDLSPIEN). Over residues 8–18 (MTRQGLRSPQE) the composition is skewed to polar residues. 2 coiled-coil regions span residues 82-104 (SLQE…LERV) and 198-226 (YSCI…LSKI). Residues 509–581 (FEIQADSKDD…ETLRSRKKSD (73 aa)) form a disordered region. The segment covering 569 to 581 (VSRETLRSRKKSD) has biased composition (basic and acidic residues).

Belongs to the syndetin family. Component of the endosome-associated retrograde protein (EARP) complex.

It localises to the recycling endosome. The protein resides in the membrane. Acts as a component of the EARP complex that is involved in endocytic recycling. The EARP complex associates with Rab4-positive endosomes and promotes recycling of internalized transferrin receptor (TFRC) to the plasma membrane. In Gallus gallus (Chicken), this protein is Syndetin.